A 218-amino-acid chain; its full sequence is TPA-induced transmembrane protein homolog (218 aa).

The segment at 1 to 54 is disordered; sequence MEEGSRSQSPREELELSMLDGPQEELTPLNNDLRIQPNSAEDPSPAQVGKESPW. Residues 66-86 form a helical membrane-spanning segment; the sequence is KLWMVIVTIFLCFIIVIVISL.

The protein localises to the endoplasmic reticulum membrane. This Mus musculus (Mouse) protein is TPA-induced transmembrane protein homolog.